The sequence spans 283 residues: Foldase protein PrsA 3 (283 aa).

The N-terminal stretch at 1–21 (MKKKKLFLGTIISCVVLALSA) is a signal peptide. Cys-22 is lipidated: N-palmitoyl cysteine. Residue Cys-22 is the site of S-diacylglycerol cysteine attachment. Residues 132–222 (KPEMKVSHIL…YGYHIIKVTD (91 aa)) enclose the PpiC domain.

Belongs to the PrsA family.

It is found in the cell membrane. The enzyme catalyses [protein]-peptidylproline (omega=180) = [protein]-peptidylproline (omega=0). In terms of biological role, plays a major role in protein secretion by helping the post-translocational extracellular folding of several secreted proteins. Important for the secretion of the protective antigen. The three PsrA proteins in this organism show different but overlapping substrate specificities. This is Foldase protein PrsA 3 (prsA3) from Bacillus anthracis.